Reading from the N-terminus, the 879-residue chain is Interference hedgehog (879 aa).

Residues 1–20 (MTLLTSSLLLFSLLTSRLEA) form the signal peptide. Topologically, residues 21–703 (IPVLEKSPAH…ETFNMSPMLT (683 aa)) are extracellular. 4 Ig-like C2-type domains span residues 45–142 (PGVR…IARL), 132–232 (PLVV…ERIQ), 252–340 (PHLL…YIKV), and 346–432 (PQIV…LQVN). Cystine bridges form between C68–C126, C173–C220, C276–C324, and C367–C414. 2 N-linked (GlcNAc...) asparagine glycosylation sites follow: N102 and N209. Residues 426 to 467 (GTLLQVNPKQIQEPRESGGTHRPKPNQGSKQKQMYPPSPPNV) are disordered. Fibronectin type-III domains follow at residues 461 to 567 (PPSP…LQPG) and 575 to 670 (VPEL…TQRP). N466 carries N-linked (GlcNAc...) asparagine glycosylation. R497, K501, K503, and R541 together coordinate heparin. N-linked (GlcNAc...) asparagine glycosylation is present at N557. A disordered region spans residues 662 to 698 (LKQGRTQRPKTSTTEEPTLQMGDRDTTTPSHNETFNM). 2 stretches are compositionally biased toward polar residues: residues 665-678 (GRTQ…TEEP) and 688-698 (TTPSHNETFNM). A glycan (N-linked (GlcNAc...) asparagine) is linked at N693. The chain crosses the membrane as a helical span at residues 704–724 (GTLGGGAVLTLLLISICLCVC). Residues 725–879 (RRRSSRSRGN…SSGSLNSVGV (155 aa)) are Cytoplasmic-facing. The tract at residues 728-879 (SSRSRGNNPN…SSGSLNSVGV (152 aa)) is disordered. Composition is skewed to low complexity over residues 822–836 (RAGG…NNNN) and 863–879 (SSRS…SVGV).

Belongs to the immunoglobulin superfamily. IHOG family. Homodimer. Heterotetramer; 2 iHog chains bind 2 hh chains when facilitated by heparin, heparin is required to promote high-affinity interactions between hh and iHog.

Its subcellular location is the membrane. Its function is as follows. Mediates response to the active Hedgehog (Hh) protein signal in embryos, functioning upstream or at the level of patched (ptc). The polypeptide is Interference hedgehog (Drosophila erecta (Fruit fly)).